The primary structure comprises 258 residues: 5'-nucleotidase SurE (258 aa).

Aspartate 9, aspartate 10, serine 40, and asparagine 95 together coordinate a divalent metal cation.

The protein belongs to the SurE nucleotidase family. Requires a divalent metal cation as cofactor.

The protein localises to the cytoplasm. It catalyses the reaction a ribonucleoside 5'-phosphate + H2O = a ribonucleoside + phosphate. Nucleotidase that shows phosphatase activity on nucleoside 5'-monophosphates. This Nitratiruptor sp. (strain SB155-2) protein is 5'-nucleotidase SurE.